The sequence spans 591 residues: Protein enabled homolog (591 aa).

One can recognise a WH1 domain in the interval 1 to 111; the sequence is MSEQSICQAR…SAMMHALEVL (111 aa). Over residues 115–136 the composition is skewed to polar residues; sequence ETGPTLPRQNSQLPAQVQNGPS. Residues 115-146 are disordered; that stretch reads ETGPTLPRQNSQLPAQVQNGPSQEELEIQRRQ. Ser-125 carries the phosphoserine modification. A coiled-coil region spans residues 135–265; that stretch reads PSQEELEIQR…LEWERERRIS (131 aa). 9 repeat units span residues 156 to 160, 161 to 165, 166 to 170, 171 to 175, 176 to 180, 181 to 185, 186 to 190, 191 to 195, and 196 to 200. Residues 156 to 200 are 9 X 5 AA tandem repeats of [LMQ]-E-[QR]-E-[QR]; the sequence is LERERLERERMERERLERERLERERLERERLEQEQLERERQERER. The span at 221-264 shows a compositional bias: basic and acidic residues; the sequence is RLDRERQERQERERLERLERERQERERQEQLEREQLEWERERRI. The segment at 221–379 is disordered; it reads RLDRERQERQ…PPLPASGFFL (159 aa). Ser-265 is modified (phosphoserine; by PKA). Residues 275-305 show a composition bias toward polar residues; that stretch reads TPLNSVLGDSSASEPGLQAASQPAETPSQQG. Composition is skewed to pro residues over residues 311–323 and 330–373; these read LAPPPPPPLPPGP and LPPP…PPLP. An EVH2 block A region spans residues 391–411; that stretch reads GLAAAIAGAKLRKVSRMEDTS. Residues 391-588 form an EVH2 region; it reads GLAAAIAGAK…DAIRQELSKS (198 aa). Positions 400-403 match the KLKR motif; it reads KLRK. Residues 405–549 form a disordered region; it reads SRMEDTSFPS…LSQPSANGVQ (145 aa). The segment covering 432–443 has biased composition (gly residues); sequence RGNGPLPLGGSG. Positions 442-459 are EVH2 block B; sequence SGLMEEMSALLARRRRIA. Ile-465 is subject to Phosphothreonine. 2 positions are modified to phosphoserine: Glu-471 and Glu-475. 2 stretches are compositionally biased toward polar residues: residues 479–491 and 499–509; these read PVTSKASSTSTPE and RTNTMNGSKSP. Thr-502 bears the Phosphothreonine mark. Phosphoserine occurs at positions 506, 508, and 512. Residues 538-549 are compositionally biased toward polar residues; that stretch reads TPLSQPSANGVQ. The interval 554–588 is EVH2 block C; sequence DYDRLKQDILDEMRKELTKLKEELIDAIRQELSKS. Residues 557–587 are a coiled coil; sequence RLKQDILDEMRKELTKLKEELIDAIRQELSK.

Belongs to the Ena/VASP family. As to quaternary structure, homotetramer. Interacts with APBB1IP, APBB1, PFN1 and ROBO4. Isoforms, containing the polyproline-rich regions with PPLP motifs, bind the WW domain of APBB1IP. Isoforms, containing the PPSY motif, bind, in vitro, to the WW2 and WW3 domains of NEDD4 and to the WW1 domain of YAP1. Binds the SH3 domain of BAIAP2-alpha but only after the autoinhibitory region of BAIAP2-alpha has been blocked by interaction with CDC42. Interacts, via the EVH1/WH1 domain, with the Pro-rich domains from VCL, ZYX and Listeria monocytogenes actA and with TES (via LIM domains). The TES LIM domain and the Pro-rich domains from VCL or ZYX compete for the same binding site. Interaction with ZYX is important for targeting ENAH to focal adhesions and enhances production of actin-rich structures at the apical surface of cells. Interacts, through the Pro-rich region, with the C-terminal SH3 domain of DNMPB. Binds GPHN. Interacts with FAT1 (via EVH1 domains). Heterotrimer with TES and ACTL7A. Interacts with PRPF40A. Post-translationally, NTN1-induced PKA phosphorylation on Ser-265 directly parallels the formation of filopodial protrusions. Expressed in myoepithelia of parotid, breast, bronchial glands and sweat glands. Expressed in colon-rectum muscolaris mucosae epithelium, pancreas acinar ductal epithelium, endometrium epithelium, prostate fibromuscolar stroma and placenta vascular media. Overexpressed in a majority of breast cancer cell lines and primary breast tumor lesions.

The protein resides in the cytoplasm. It localises to the cytoskeleton. The protein localises to the cell projection. It is found in the lamellipodium. Its subcellular location is the filopodium. The protein resides in the synapse. It localises to the cell junction. The protein localises to the focal adhesion. Ena/VASP proteins are actin-associated proteins involved in a range of processes dependent on cytoskeleton remodeling and cell polarity such as axon guidance and lamellipodial and filopodial dynamics in migrating cells. ENAH induces the formation of F-actin rich outgrowths in fibroblasts. Acts synergistically with BAIAP2-alpha and downstream of NTN1 to promote filipodia formation. The protein is Protein enabled homolog (ENAH) of Homo sapiens (Human).